We begin with the raw amino-acid sequence, 27 residues long: Zinc metalloproteinase multactivase catalytic subunit (27 aa).

The region spanning 12-27 is the Peptidase M12B domain; it reads FIELVIIVDHSXXTYK. Glu-14 provides a ligand contact to Ca(2+).

The protein belongs to the venom metalloproteinase (M12B) family. P-III subfamily. P-IIId sub-subfamily. As to quaternary structure, heterodimer of a metalloproteinase subunit and a regulatory subunit comprising two homologous disulfide-linked lectins (AC P81798). Requires Zn(2+) as cofactor. In terms of tissue distribution, expressed by the venom gland.

The protein resides in the secreted. Its function is as follows. This carinactivase-like calcium-dependent prothrombin (F2) activator activates prothrombin via recognition of the calcium ion bound conformation of its gamma-carboxyglutamic acid (GLA) domain, and the subsequent conversion of prothrombin to active thrombin is catalyzed by the catalytic subunit. The sequence is that of Zinc metalloproteinase multactivase catalytic subunit from Echis multisquamatus (Central Asian sand viper).